Consider the following 349-residue polypeptide: MALTVNVVGPAPWGFRISGGRDFHTPIIVTKVTERGKAEAADLRPGDIIVAINGESAESMLHAEAQSKIRQSASPLRLQLDRSQTASPGQINGEGSLDMLATRFQGSLRTHHNSQSSQRSACFSPASLSPRPDSPFSTPPPTSPIALSGENVIGCSFQSLTHSPGLAATHHLTYPGQPTSQQAGHSSPSDSTVRVLLHSPGRPSSPRLSSLDLEEDSEVFKMLQENRQGRAAPRQSSSFRLLQEALEAEERGGTPAFVPSSLSPKASLPTSRALATPPKLHTCEKCSVNISNQAVRIQEGRYRHPGCYTCADCGLNLKMRGHFWVGNELYCEKHARQRYSMPGTLSSQA.

The PDZ domain maps to 1 to 84; it reads MALTVNVVGP…PLRLQLDRSQ (84 aa). 2 disordered regions span residues 72-95 and 108-147; these read SASPLRLQLDRSQTASPGQINGEG and LRTHHNSQSSQRSACFSPASLSPRPDSPFSTPPPTSPIAL. 2 stretches are compositionally biased toward polar residues: residues 81-90 and 108-121; these read DRSQTASPGQ and LRTHHNSQSSQRSA. Residues serine 124, serine 127, serine 129, serine 134, and serine 137 each carry the phosphoserine modification. A phosphothreonine mark is found at threonine 138 and threonine 142. Phosphoserine occurs at positions 143 and 163. 2 disordered regions span residues 168-212 and 250-272; these read ATHH…SSLD and ERGGTPAFVPSSLSPKASLPTSR. Residues 176 to 192 are compositionally biased toward polar residues; the sequence is GQPTSQQAGHSSPSDST. Phosphoserine is present on residues serine 199, serine 204, serine 205, serine 209, serine 210, and serine 263. The segment covering 199-211 has biased composition (low complexity); sequence SPGRPSSPRLSSL. Residues 260-270 show a composition bias toward polar residues; sequence SSLSPKASLPT. The 61-residue stretch at 281–341 folds into the LIM zinc-binding domain; sequence HTCEKCSVNI…EKHARQRYSM (61 aa).

In terms of assembly, interacts with alpha-actinins ACTN1 and ACTN4, FLNA and MYH9. Interacts (via LIM zinc-binding domain) with MKRN2. Highly expressed in cornea and lung. Expressed at intermediate level in sclera and combined tissues of the eye irido-corneal angle. Specifically expressed in the corneal epithelial cells but not in other corneal layers.

It localises to the cytoplasm. Its subcellular location is the cytoskeleton. Its function is as follows. Probable adapter protein located at the actin cytoskeleton that promotes cell attachment. Necessary for the migratory capacity of epithelial cells. Overexpression enhances cell adhesion to collagen and fibronectin and suppresses anchorage independent growth. May contribute to tumor cell migratory capacity. The sequence is that of PDZ and LIM domain protein 2 (Pdlim2) from Rattus norvegicus (Rat).